We begin with the raw amino-acid sequence, 234 residues long: Urease subunit alpha (234 aa).

The segment at 1–102 (MKLTPKELDK…LVTIHTPVEA (102 aa)) is urease gamma. The tract at residues 103–234 (GSDKLAPGEV…GTINCGCDNK (132 aa)) is urease beta.

This sequence in the N-terminal section; belongs to the urease gamma subunit family. In the C-terminal section; belongs to the urease beta subunit family. Heterohexamer of 3 UreA (alpha) and 3 UreB (beta) subunits.

Its subcellular location is the cytoplasm. It carries out the reaction urea + 2 H2O + H(+) = hydrogencarbonate + 2 NH4(+). It functions in the pathway nitrogen metabolism; urea degradation; CO(2) and NH(3) from urea (urease route): step 1/1. The chain is Urease subunit alpha from Helicobacter heilmannii.